The sequence spans 172 residues: Translation initiation factor IF-3 (172 aa).

The protein belongs to the IF-3 family. In terms of assembly, monomer.

It is found in the cytoplasm. IF-3 binds to the 30S ribosomal subunit and shifts the equilibrium between 70S ribosomes and their 50S and 30S subunits in favor of the free subunits, thus enhancing the availability of 30S subunits on which protein synthesis initiation begins. This is Translation initiation factor IF-3 from Campylobacter curvus (strain 525.92).